Consider the following 243-residue polypeptide: NAD(P)H-quinone oxidoreductase subunit K (243 aa).

[4Fe-4S] cluster contacts are provided by cysteine 59, cysteine 60, cysteine 124, and cysteine 155.

Belongs to the complex I 20 kDa subunit family. In terms of assembly, NDH-1 can be composed of about 15 different subunits; different subcomplexes with different compositions have been identified which probably have different functions. Requires [4Fe-4S] cluster as cofactor.

It is found in the cellular thylakoid membrane. It carries out the reaction a plastoquinone + NADH + (n+1) H(+)(in) = a plastoquinol + NAD(+) + n H(+)(out). The catalysed reaction is a plastoquinone + NADPH + (n+1) H(+)(in) = a plastoquinol + NADP(+) + n H(+)(out). Functionally, NDH-1 shuttles electrons from an unknown electron donor, via FMN and iron-sulfur (Fe-S) centers, to quinones in the respiratory and/or the photosynthetic chain. The immediate electron acceptor for the enzyme in this species is believed to be plastoquinone. Couples the redox reaction to proton translocation, and thus conserves the redox energy in a proton gradient. Cyanobacterial NDH-1 also plays a role in inorganic carbon-concentration. The chain is NAD(P)H-quinone oxidoreductase subunit K from Picosynechococcus sp. (strain ATCC 27264 / PCC 7002 / PR-6) (Agmenellum quadruplicatum).